A 235-amino-acid chain; its full sequence is Lipoprotein signal peptidase (235 aa).

A disordered region spans residues 1 to 23 (MTDETSGPAEPVTDAPGDAESPA). The next 3 helical transmembrane spans lie at 31-51 (LLLT…VLAV), 84-104 (GYTW…IWMG), and 108-128 (VSPW…GNLV). Catalysis depends on residues Asp144 and Asp158. A helical membrane pass occupies residues 156–176 (VADPSVVGGAILLVALSLFGF). The segment at 185 to 235 (RPGEDAEPSAGASDSTPEAPAADGPDKPAGPVGPEDAAEESKTVGHQAEPS) is disordered. A compositionally biased stretch (low complexity) spans 201-218 (PEAPAADGPDKPAGPVGP).

It belongs to the peptidase A8 family.

It is found in the cell membrane. It carries out the reaction Release of signal peptides from bacterial membrane prolipoproteins. Hydrolyzes -Xaa-Yaa-Zaa-|-(S,diacylglyceryl)Cys-, in which Xaa is hydrophobic (preferably Leu), and Yaa (Ala or Ser) and Zaa (Gly or Ala) have small, neutral side chains.. It functions in the pathway protein modification; lipoprotein biosynthesis (signal peptide cleavage). Functionally, this protein specifically catalyzes the removal of signal peptides from prolipoproteins. This Mycolicibacterium smegmatis (strain ATCC 700084 / mc(2)155) (Mycobacterium smegmatis) protein is Lipoprotein signal peptidase.